The chain runs to 140 residues: Vesicle transport protein GOT1 (140 aa).

Transmembrane regions (helical) follow at residues 12-32 (IGLG…IFVF), 35-55 (GLIA…IGIN), 71-91 (ISFG…GLLL), and 96-116 (FLVL…RIPL).

This sequence belongs to the GOT1 family. As to quaternary structure, homodimer. No interactions with STL1, STL2, CESA1, CESA3, CESA4, CESA6, CESA7 or CESA8.

The protein localises to the golgi apparatus membrane. In terms of biological role, may be involved in fusion of ER-derived transport vesicles with the Golgi complex. The polypeptide is Vesicle transport protein GOT1 (Arabidopsis thaliana (Mouse-ear cress)).